Consider the following 428-residue polypeptide: Glutamate-1-semialdehyde 2,1-aminomutase 1 (428 aa).

An N6-(pyridoxal phosphate)lysine modification is found at Lys267.

This sequence belongs to the class-III pyridoxal-phosphate-dependent aminotransferase family. HemL subfamily. Homodimer. It depends on pyridoxal 5'-phosphate as a cofactor.

The protein resides in the cytoplasm. The catalysed reaction is (S)-4-amino-5-oxopentanoate = 5-aminolevulinate. It participates in porphyrin-containing compound metabolism; protoporphyrin-IX biosynthesis; 5-aminolevulinate from L-glutamyl-tRNA(Glu): step 2/2. The polypeptide is Glutamate-1-semialdehyde 2,1-aminomutase 1 (Staphylococcus aureus (strain bovine RF122 / ET3-1)).